The following is a 543-amino-acid chain: Gap junction alpha-10 protein (543 aa).

At 1–16 (MGDWNLLGGILEEVHS) the chain is on the cytoplasmic side. Residues 17-37 (HSTIVGKIWLTILFIFRMLVL) traverse the membrane as a helical segment. The Extracellular portion of the chain corresponds to 38-76 (RVAAEDVWDDEQSAFACNTRQPGCNNICYDDAFPISLIR). The chain crosses the membrane as a helical span at residues 77–97 (FWVLQIIFVSSPSLVYMGHAL). The Cytoplasmic segment spans residues 98–165 (YRLRAFEKDR…TYVLHILTRS (68 aa)). Residues 166-186 (VLEVGFMIGQYILYGFQMHPL) traverse the membrane as a helical segment. The Extracellular segment spans residues 187–209 (YKCTQPPCPNAVDCFVSRPTEKT). Residues 210 to 230 (IFMLFMHSIAAISLLLNILEI) traverse the membrane as a helical segment. The Cytoplasmic segment spans residues 231–543 (FHLGIRKIMR…HSIHSVKFNS (313 aa)). Disordered regions lie at residues 306–359 (PQPR…SSFG) and 379–424 (PSFA…DRSR). Positions 317-328 (NGKKDWSEKDQH) are enriched in basic and acidic residues. Residues 344–359 (AGNQHLGQQSDHSSFG) show a composition bias toward polar residues. A compositionally biased stretch (basic and acidic residues) spans 400 to 413 (TDLHSHCRDSEGSM).

This sequence belongs to the connexin family. Alpha-type (group II) subfamily. A connexon is composed of a hexamer of connexins. In terms of tissue distribution, expressed in skeletal muscle and heart.

It localises to the cell membrane. The protein resides in the cell junction. The protein localises to the gap junction. One gap junction consists of a cluster of closely packed pairs of transmembrane channels, the connexons, through which materials of low MW diffuse from one cell to a neighboring cell. Involved in tracer coupling between horizontal cells of the retina. May play a role in the regulation of horizontal cell patterning. In Homo sapiens (Human), this protein is Gap junction alpha-10 protein (GJA10).